Reading from the N-terminus, the 307-residue chain is Geranylgeranyl diphosphate synthase (307 aa).

Isopentenyl diphosphate-binding residues include Lys-52, Arg-55, and His-86. Residues Asp-93 and Asp-99 each contribute to the Mg(2+) site. Arg-104 serves as a coordination point for (2E,6E)-farnesyl diphosphate. Residue Arg-105 participates in isopentenyl diphosphate binding. 3 residues coordinate (2E,6E)-farnesyl diphosphate: Lys-188, Thr-189, and Gln-226.

The protein belongs to the FPP/GGPP synthase family. Mg(2+) serves as cofactor.

The enzyme catalyses isopentenyl diphosphate + (2E,6E)-farnesyl diphosphate = (2E,6E,10E)-geranylgeranyl diphosphate + diphosphate. It participates in isoprenoid biosynthesis; geranylgeranyl diphosphate biosynthesis; geranylgeranyl diphosphate from farnesyl diphosphate and isopentenyl diphosphate: step 1/1. Catalyzes the condensation of farnesyl diphosphate (FPP) and isopentenyl diphosphate (IPP) to yield geranylgeranyl diphosphate (GGPP) needed for biosynthesis of carotenoids and diterpenes. This is Geranylgeranyl diphosphate synthase (crtE) from Pseudescherichia vulneris (Escherichia vulneris).